Reading from the N-terminus, the 247-residue chain is Probable transcriptional regulatory protein Gura_1416 (247 aa).

This sequence belongs to the TACO1 family.

It is found in the cytoplasm. The sequence is that of Probable transcriptional regulatory protein Gura_1416 from Geotalea uraniireducens (strain Rf4) (Geobacter uraniireducens).